An 832-amino-acid chain; its full sequence is WD repeat-containing protein 75 (832 aa).

13 WD repeats span residues 4 to 43, 47 to 86, 90 to 131, 145 to 184, 193 to 230, 236 to 275, 278 to 317, 323 to 361, 375 to 424, 431 to 477, 490 to 528, 532 to 572, and 577 to 614; these read QCQI…KVYS, EECI…KLWD, GILI…QLVS, KEIS…YYFK, LKAT…RLWR, KEYT…VQWP, SEEK…SIID, SGII…QFYS, QQEF…KLWE, SFVL…KVWM, SWLC…TVWE, WDLK…CCWN, and ALEW…FLFQ. The disordered stretch occupies residues 764–798; the sequence is SQSTEESKEDEEMKSEHSEADSSDETEEMESQKRF.

As to quaternary structure, component of the proposed t-UTP subcomplex of the ribosomal small subunit (SSU) processome. SSU processome is composed of more than 70 proteins and the RNA chaperone small nucleolar RNA (snoRNA) U3.

The protein resides in the nucleus. Its subcellular location is the nucleolus. In terms of biological role, ribosome biogenesis factor. Part of the small subunit (SSU) processome, first precursor of the small eukaryotic ribosomal subunit. During the assembly of the SSU processome in the nucleolus, many ribosome biogenesis factors, an RNA chaperone and ribosomal proteins associate with the nascent pre-rRNA and work in concert to generate RNA folding, modifications, rearrangements and cleavage as well as targeted degradation of pre-ribosomal RNA by the RNA exosome. Involved in nucleolar processing of pre-18S ribosomal RNA. Required for optimal pre-ribosomal RNA transcription by RNA polymerase I. In Xenopus laevis (African clawed frog), this protein is WD repeat-containing protein 75 (wdr75).